The chain runs to 280 residues: 2-dehydro-3-deoxyphosphooctonate aldolase (280 aa).

This sequence belongs to the KdsA family.

The protein resides in the cytoplasm. It carries out the reaction D-arabinose 5-phosphate + phosphoenolpyruvate + H2O = 3-deoxy-alpha-D-manno-2-octulosonate-8-phosphate + phosphate. It functions in the pathway carbohydrate biosynthesis; 3-deoxy-D-manno-octulosonate biosynthesis; 3-deoxy-D-manno-octulosonate from D-ribulose 5-phosphate: step 2/3. The protein operates within bacterial outer membrane biogenesis; lipopolysaccharide biosynthesis. This Neisseria meningitidis serogroup A / serotype 4A (strain DSM 15465 / Z2491) protein is 2-dehydro-3-deoxyphosphooctonate aldolase.